The sequence spans 39 residues: Potassium channel toxin alpha-KTx 2.16 (39 aa).

Intrachain disulfides connect cysteine 7–cysteine 29, cysteine 13–cysteine 34, and cysteine 17–cysteine 36. Isoleucine 39 carries the isoleucine amide modification.

Belongs to the short scorpion toxin superfamily. Potassium channel inhibitor family. Alpha-KTx 02 subfamily. As to expression, expressed by the venom gland.

The protein resides in the secreted. In terms of biological role, blocks human voltage-gated potassium channels Kv1.2/KCNA2 (IC(50)=0.7 nM), Kv1.3/KCNA3 (IC(50)=26.2 nM) and blocks intermediate conductance calcium-activated potassium channel KCa3.1/KCNN4 (IC(50)=56 nM). This Centruroides tecomanus (Scorpion) protein is Potassium channel toxin alpha-KTx 2.16.